Consider the following 345-residue polypeptide: Large ribosomal subunit protein uL4 (345 aa).

Ala-2 bears the N-acetylalanine mark.

Belongs to the universal ribosomal protein uL4 family.

The protein is Large ribosomal subunit protein uL4 (rpl-4) of Caenorhabditis elegans.